Consider the following 485-residue polypeptide: WAS/WASL-interacting protein family member 3 (485 aa).

Positions 1–30 (MPVPPPPPPPLPPPPPPLGAPPPPPPPGPP) are enriched in pro residues. A disordered region spans residues 1–485 (MPVPPPPPPP…NSQLSLKALR (485 aa)). 3 consecutive short sequence motifs (profilin-binding motif) follow at residues 3–8 (VPPPPP), 11–16 (LPPPPP), and 20–25 (APPPPP). In terms of domain architecture, WH2 spans 45–62 (GRSALLADIQQGTRLRKV). Position 46 is an asymmetric dimethylarginine (Arg46). The short motif at 58–61 (RLRK) is the RLRK element. Over residues 63 to 78 (TQINDRSAPQIESSKG) the composition is skewed to polar residues. Residue Ser150 is modified to Phosphoserine. 2 stretches are compositionally biased toward pro residues: residues 165-200 (PVPP…PPAS) and 207-243 (VSPP…PLPP). Ser208 carries the phosphoserine modification. The span at 244 to 259 (ASALSEKAVRPQLAPL) shows a compositional bias: low complexity. Composition is skewed to pro residues over residues 260 to 275 (HLPP…PPYG) and 293 to 312 (PPAP…PPLP). Position 394 is a phosphoserine (Ser394). Polar residues predominate over residues 396–407 (TTELSSKTQQPG). Residues 417–441 (VIDDFESKFTFHSMEDFPPPDEYKP) show a composition bias toward basic and acidic residues. A WASP-binding motif motif is present at residues 426 to 450 (TFHSMEDFPPPDEYKPGQKIYPSKV). Over residues 475 to 485 (RNSQLSLKALR) the composition is skewed to polar residues.

Belongs to the verprolin family. As to quaternary structure, isoform 1 interacts with WASL (via WH1 domain), and monomeric and filamentous actin. Detected mainly in brain and at lower levels in heart and lung (at protein level). Also detected in testis but not in kidney, liver or spleen.

It localises to the cytoplasm. In terms of biological role, may have a role in spermatogenesis. May be a regulator of cytoskeletal organization. The protein is WAS/WASL-interacting protein family member 3 (Wipf3) of Rattus norvegicus (Rat).